A 219-amino-acid chain; its full sequence is ER lumen protein-retaining receptor (219 aa).

At 1–5 (MNPFR) the chain is on the lumenal side. The helical transmembrane segment at 6-26 (ILGDLSHLTSILILIHNIKTT) threads the bilayer. Residues 27 to 37 (RYIEGISFKTQ) lie on the Cytoplasmic side of the membrane. Transmembrane regions (helical) follow at residues 38-58 (TLYA…HWVS) and 59-79 (LYNA…VVLL). At 80-98 (QGSKRTNTIAYNEMLMHDT) the chain is on the cytoplasmic side. The chain crosses the membrane as a helical span at residues 99 to 116 (FKIQHLLIGSALMSVFFH). Topologically, residues 117-118 (HK) are lumenal. Residues 119–139 (FTFLELAWSFSVWLESVAILP) form a helical membrane-spanning segment. At 140–152 (QLYMLSKGGKTRS) the chain is on the cytoplasmic side. Residues 153 to 173 (LTVHYIFAMGLYRALYIPNWI) form a helical membrane-spanning segment. At 174-185 (WRYSTEDKKLDK) the chain is on the lumenal side. The chain crosses the membrane as a helical span at residues 186–206 (IAFFAGLLQTLLYSDFFYIYY). Topologically, residues 207 to 219 (TKVIRGKGFKLPK) are cytoplasmic.

This sequence belongs to the ERD2 family.

Its subcellular location is the endoplasmic reticulum membrane. Its function is as follows. Required for the retention of luminal endoplasmic reticulum proteins. Determines the specificity of the luminal ER protein retention system. Also required for normal vesicular traffic through the Golgi. This receptor strongly recognizes H-D-E-L and weakly recognizes D-D-E-L and K-D-E-L. The sequence is that of ER lumen protein-retaining receptor from Saccharomyces cerevisiae (strain ATCC 204508 / S288c) (Baker's yeast).